We begin with the raw amino-acid sequence, 616 residues long: Membrane protein insertase YidC (616 aa).

Residues Met-8–Gly-28 traverse the membrane as a helical segment. The interval Arg-33–Asp-85 is disordered. 2 stretches are compositionally biased toward low complexity: residues Gln-36 to Ala-51 and Gly-62 to Pro-80. Transmembrane regions (helical) follow at residues Leu-386–Leu-406, Trp-460–Ile-480, Tyr-516–Met-536, and Phe-551–Ile-571.

Belongs to the OXA1/ALB3/YidC family. Type 1 subfamily. Interacts with the Sec translocase complex via SecD. Specifically interacts with transmembrane segments of nascent integral membrane proteins during membrane integration.

The protein localises to the cell inner membrane. In terms of biological role, required for the insertion and/or proper folding and/or complex formation of integral membrane proteins into the membrane. Involved in integration of membrane proteins that insert both dependently and independently of the Sec translocase complex, as well as at least some lipoproteins. Aids folding of multispanning membrane proteins. The chain is Membrane protein insertase YidC from Methylorubrum extorquens (strain PA1) (Methylobacterium extorquens).